The sequence spans 397 residues: L-asparaginase-like protein GM15681 (397 aa).

Residues 1 to 22 (MLAQSCCLRLLILLLLFTSICS) form the signal peptide. Intrachain disulfides connect C90-C95, C189-C205, and C344-C371.

It belongs to the Ntn-hydrolase family.

This chain is L-asparaginase-like protein GM15681, found in Drosophila sechellia (Fruit fly).